Reading from the N-terminus, the 273-residue chain is Phosphate import ATP-binding protein PstB (273 aa).

In terms of domain architecture, ABC transporter spans 19-258 (ISIQNVTISY…FNETEKIFNS (240 aa)). An ATP-binding site is contributed by 51–58 (GPSGCGKS).

The protein belongs to the ABC transporter superfamily. Phosphate importer (TC 3.A.1.7) family. As to quaternary structure, the complex is composed of two ATP-binding proteins (PstB), two transmembrane proteins (PstC and PstA) and a solute-binding protein (PstS).

It is found in the cell inner membrane. It carries out the reaction phosphate(out) + ATP + H2O = ADP + 2 phosphate(in) + H(+). Its function is as follows. Part of the ABC transporter complex PstSACB involved in phosphate import. Responsible for energy coupling to the transport system. This is Phosphate import ATP-binding protein PstB from Parasynechococcus marenigrum (strain WH8102).